The sequence spans 130 residues: UPF0251 protein Swol_2090 (130 aa).

The protein belongs to the UPF0251 family.

The protein is UPF0251 protein Swol_2090 of Syntrophomonas wolfei subsp. wolfei (strain DSM 2245B / Goettingen).